Here is a 145-residue protein sequence, read N- to C-terminus: Secreted RxLR effector protein 100 (145 aa).

The signal sequence occupies residues 1-19 (MRYLLLTFFTFHCQMVADA). Residues 27-30 (RLLR) carry the RxLR motif. The tract at residues 38–77 (SGEGKIEEAGMIVTTGAPTPENETMEHNEVPQSTTDTDQK) is disordered. Asparagine 59 is a glycosylation site (N-linked (GlcNAc...) asparagine).

It belongs to the RxLR effector family.

Its subcellular location is the secreted. The protein localises to the host nucleus. Secreted effector that dos not suppress the host cell death induced by cell death-inducing proteins. This is Secreted RxLR effector protein 100 from Plasmopara viticola (Downy mildew of grapevine).